Consider the following 400-residue polypeptide: U-box domain-containing protein 37 (400 aa).

Residues 229-298 (KEWESAYLEE…RKAKEERDLL (70 aa)) are a coiled coil. One can recognise a U-box domain in the interval 324-398 (EAPQYFICPI…QEWLHASSSF (75 aa)).

It catalyses the reaction S-ubiquitinyl-[E2 ubiquitin-conjugating enzyme]-L-cysteine + [acceptor protein]-L-lysine = [E2 ubiquitin-conjugating enzyme]-L-cysteine + N(6)-ubiquitinyl-[acceptor protein]-L-lysine.. It participates in protein modification; protein ubiquitination. Its function is as follows. Functions as an E3 ubiquitin ligase. The chain is U-box domain-containing protein 37 (PUB37) from Arabidopsis thaliana (Mouse-ear cress).